A 260-amino-acid chain; its full sequence is MNRHTDTHYPSLADKVVLISGGASGIGRAFVEAFVAQGSRVAFLDLDAEAGQGLAHALGANSLFLPCDVRDIERLKACVAEVERTWGAVDVLINNAARDDRHALADVSVEYWDERMQTNLRHAFFAAQAVAPGMARRGSGAIINMGSISWMRGRPGMVCYTTAKAALNGMTRTLARELGGQGIRINSLVPGAIRTERQDAMWAADPAGLEAASQAFIDQQMLKFRLDASDCARLALFLASDDSRGCTGQNFVVDAGLSIQ.

The Proton acceptor role is filled by Tyr-160.

It belongs to the short-chain dehydrogenases/reductases (SDR) family.

The catalysed reaction is 6-sulfo-D-quinovose + NAD(+) = 6-deoxy-6-sulfo-D-glucono-1,5-lactone + NADH + H(+). In terms of biological role, catalyzes the oxidation of sulfoquinovose to 6-deoxy-6-sulfo-D-glucono-1,5-lactone, with a strong preference for NAD(+) as the electron acceptor. Is involved in a degradation pathway of sulfoquinovose (SQ) that allows P.putida SQ1 to use SQ as the sole carbon and energy source for growth. The sequence is that of Sulfoquinovose 1-dehydrogenase from Pseudomonas putida (Arthrobacter siderocapsulatus).